We begin with the raw amino-acid sequence, 143 residues long: MGLMKKFRDYFLEEDYEDYEEEYEAPQQEEEALPLKTANKTNVVSLQSVQKSAKVVLAEPRVYAEAQEIADHLKSRRAVIVNLQRIQHEQAKRIVDFLSGTVYAIGGDIQQVGTKIFLCTPENVDVSGAISLDGEDDRPMKRW.

Belongs to the SepF family. As to quaternary structure, homodimer. Interacts with FtsZ.

It is found in the cytoplasm. In terms of biological role, cell division protein that is part of the divisome complex and is recruited early to the Z-ring. Probably stimulates Z-ring formation, perhaps through the cross-linking of FtsZ protofilaments. Its function overlaps with FtsA. In Geobacillus thermodenitrificans (strain NG80-2), this protein is Cell division protein SepF.